The sequence spans 178 residues: Interleukin-1 receptor antagonist protein (178 aa).

A signal peptide spans 1 to 26 (MEICWGPYSHLISLLLILLFHSEAAC). C92 and C142 are joined by a disulfide. Residue N110 is glycosylated (N-linked (GlcNAc...) asparagine).

It belongs to the IL-1 family.

The protein localises to the secreted. It localises to the cytoplasm. In terms of biological role, anti-inflammatory antagonist of interleukin-1 family of proinflammatory cytokines such as interleukin-1beta/IL1B and interleukin-1alpha/IL1A. Protects from immune dysregulation and uncontrolled systemic inflammation triggered by IL1 for a range of innate stimulatory agents such as pathogens. This is Interleukin-1 receptor antagonist protein (Il1rn) from Mus musculus (Mouse).